Here is a 557-residue protein sequence, read N- to C-terminus: 2-succinyl-5-enolpyruvyl-6-hydroxy-3-cyclohexene-1-carboxylate synthase (557 aa).

This sequence belongs to the TPP enzyme family. MenD subfamily. Homodimer. The cofactor is Mg(2+). Mn(2+) serves as cofactor. Requires thiamine diphosphate as cofactor.

The catalysed reaction is isochorismate + 2-oxoglutarate + H(+) = 5-enolpyruvoyl-6-hydroxy-2-succinyl-cyclohex-3-ene-1-carboxylate + CO2. It participates in quinol/quinone metabolism; 1,4-dihydroxy-2-naphthoate biosynthesis; 1,4-dihydroxy-2-naphthoate from chorismate: step 2/7. The protein operates within quinol/quinone metabolism; menaquinone biosynthesis. Its function is as follows. Catalyzes the thiamine diphosphate-dependent decarboxylation of 2-oxoglutarate and the subsequent addition of the resulting succinic semialdehyde-thiamine pyrophosphate anion to isochorismate to yield 2-succinyl-5-enolpyruvyl-6-hydroxy-3-cyclohexene-1-carboxylate (SEPHCHC). This is 2-succinyl-5-enolpyruvyl-6-hydroxy-3-cyclohexene-1-carboxylate synthase from Staphylococcus aureus (strain bovine RF122 / ET3-1).